Here is a 54-residue protein sequence, read N- to C-terminus: Large ribosomal subunit protein bL33A (54 aa).

The protein belongs to the bacterial ribosomal protein bL33 family.

The chain is Large ribosomal subunit protein bL33A from Mycobacteroides abscessus (strain ATCC 19977 / DSM 44196 / CCUG 20993 / CIP 104536 / JCM 13569 / NCTC 13031 / TMC 1543 / L948) (Mycobacterium abscessus).